Consider the following 247-residue polypeptide: Adiponectin (247 aa).

The first 17 residues, Met-1–Ala-17, serve as a signal peptide directing secretion. Residues Thr-23 and Thr-24 are each glycosylated (O-linked (GalNAc...) threonine). A 5-hydroxylysine modification is found at Lys-36. Cys-39 is modified (S-(2-succinyl)cysteine). The disordered stretch occupies residues Ala-44 to Gly-105. Positions Gly-45 to Ala-110 constitute a Collagen-like domain. Pro-47, Pro-50, and Pro-56 each carry 4-hydroxyproline. Positions Arg-58–Asp-73 are enriched in basic and acidic residues. 3 positions are modified to 5-hydroxylysine; alternate: Lys-68, Lys-71, and Lys-80. Lys-68, Lys-71, and Lys-80 each carry an O-linked (Gal...) hydroxylysine; alternate glycan. Pro-94 is subject to 4-hydroxyproline. Lys-104 is modified (5-hydroxylysine; alternate). The O-linked (Gal...) hydroxylysine; alternate glycan is linked to Lys-104. The C1q domain maps to Ala-111–Asn-247.

In terms of assembly, homomultimer. Forms trimers, hexamers and 12- to 18-mers. The trimers (low molecular weight complexes / LMW) are assembled via non-covalent interactions of the collagen-like domains in a triple helix and hydrophobic interactions within the globular C1q domain. Several trimers can associate to form disulfide-linked hexamers (middle molecular weight complexes / MMW) and larger complexes (higher molecular weight / HMW). The HMW-complex assembly is also modulated by the degree of lysine hydroxylation and glycosylation. LMW, MMW and HMW complexes bind to HBEGF, MMW and HMW complexes bind to PDGFB, and HMW complex binds to FGF2. Interacts with CTRP9 via the C1q domain (heterotrimeric complex). Post-translationally, HMW complexes are more extensively glycosylated than smaller oligomers. Hydroxylation and glycosylation of the lysine residues within the collagen-like domain of adiponectin seem to be critically involved in regulating the formation and/or secretion of HMW complexes and consequently contribute to the insulin-sensitizing activity of adiponectin in hepatocytes. In terms of processing, O-glycosylated. Not N-glycosylated O-linked glycans on hydroxylysine residues consist of Glc-Gal disaccharides bound to the oxygen atom of post-translationally added hydroxyl groups. O-linked glycosylation in the N-terminal is disialylated with the structure Neu5Acalpha2-&gt;8Neu5Acalpha2-&gt;3Gal. Sialylated by alpha 2,8-sialyltransferase III. Succination of Cys-39 by the Krebs cycle intermediate fumarate, which leads to S-(2-succinyl)cysteine residues, inhibits polymerization and secretion of adiponectin. Adiponectin is a major target for succination in both adipocytes and adipose tissue of diabetic mice. It was proposed that succination of proteins is a biomarker of mitochondrial stress and accumulation of Krebs cycle intermediates in adipose tissue in diabetes and that succination of adiponectin may contribute to the decrease in plasma adiponectin in diabetes. In terms of tissue distribution, synthesized exclusively by adipocytes and secreted into plasma.

It localises to the secreted. Its activity is regulated as follows. Polymerization and secretion of adiponectin is inhibited by succination of cysteine residues by the Krebs cycle intermediate fumarate, which leads to S-(2-succinyl)cysteine residues. Important adipokine involved in the control of fat metabolism and insulin sensitivity, with direct anti-diabetic, anti-atherogenic and anti-inflammatory activities. Stimulates AMPK phosphorylation and activation in the liver and the skeletal muscle, enhancing glucose utilization and fatty-acid combustion. Antagonizes TNF-alpha by negatively regulating its expression in various tissues such as liver and macrophages, and also by counteracting its effects. Inhibits endothelial NF-kappa-B signaling through a cAMP-dependent pathway. May play a role in cell growth, angiogenesis and tissue remodeling by binding and sequestering various growth factors with distinct binding affinities, depending on the type of complex, LMW, MMW or HMW. The sequence is that of Adiponectin (Adipoq) from Mus musculus (Mouse).